Reading from the N-terminus, the 141-residue chain is Hemoglobin subunit alpha (141 aa).

The 141-residue stretch at 1-141 folds into the Globin domain; it reads VLSPADKTNV…VSTVLTSKYR (141 aa). Ser-3 is subject to Phosphoserine. At Lys-7 the chain carries N6-succinyllysine. Residue Thr-8 is modified to Phosphothreonine. Position 11 is an N6-succinyllysine (Lys-11). Lys-16 is modified (N6-acetyllysine; alternate). Lys-16 carries the post-translational modification N6-succinyllysine; alternate. At Tyr-24 the chain carries Phosphotyrosine. The residue at position 35 (Ser-35) is a Phosphoserine. Lys-40 carries the post-translational modification N6-succinyllysine. The residue at position 49 (Ser-49) is a Phosphoserine. His-58 lines the O2 pocket. His-87 is a binding site for heme b. The residue at position 102 (Ser-102) is a Phosphoserine. Position 108 is a phosphothreonine (Thr-108). Phosphoserine is present on Ser-124. 2 positions are modified to phosphothreonine: Thr-134 and Thr-137. Ser-138 carries the phosphoserine modification.

This sequence belongs to the globin family. In terms of assembly, heterotetramer of two alpha chains and two beta chains. In terms of tissue distribution, red blood cells.

In terms of biological role, involved in oxygen transport from the lung to the various peripheral tissues. Functionally, hemopressin acts as an antagonist peptide of the cannabinoid receptor CNR1. Hemopressin-binding efficiently blocks cannabinoid receptor CNR1 and subsequent signaling. In Martes foina (Beech marten), this protein is Hemoglobin subunit alpha (HBA).